A 195-amino-acid polypeptide reads, in one-letter code: UPF0316 protein Pcar_2434 (195 aa).

Helical transmembrane passes span 13–33 (LFLLPLLVFFARIIDVSIGTL), 45–65 (WAGVLGFFESLIWVLAISQVM), and 71–91 (VWTYIAFALGFATGNYVGVLI).

The protein belongs to the UPF0316 family.

The protein localises to the cell membrane. This Syntrophotalea carbinolica (strain DSM 2380 / NBRC 103641 / GraBd1) (Pelobacter carbinolicus) protein is UPF0316 protein Pcar_2434.